The chain runs to 337 residues: tRNA-dihydrouridine synthase B (337 aa).

FMN-binding positions include 19-21 (PMA) and glutamine 73. The active-site Proton donor is cysteine 103. FMN is bound by residues lysine 142, 203-205 (NGD), and 227-228 (GR).

It belongs to the Dus family. DusB subfamily. It depends on FMN as a cofactor.

It carries out the reaction a 5,6-dihydrouridine in tRNA + NAD(+) = a uridine in tRNA + NADH + H(+). It catalyses the reaction a 5,6-dihydrouridine in tRNA + NADP(+) = a uridine in tRNA + NADPH + H(+). Its function is as follows. Catalyzes the synthesis of 5,6-dihydrouridine (D), a modified base found in the D-loop of most tRNAs, via the reduction of the C5-C6 double bond in target uridines. This Pseudomonas syringae pv. tomato (strain ATCC BAA-871 / DC3000) protein is tRNA-dihydrouridine synthase B.